A 378-amino-acid chain; its full sequence is MGSSEKNGTAYGEYTYAELEREQYWPSEKLRISITGAGGFIGSHIARRLKSEGHYIIASDWKKNEHMTEDMFCHEFHLVDLRVMDNCLKVTNSVDHVFNLAADMGGMGFIQSNHSVIMYNNTMISFNMLEAARINGVKRFFYASSACIYPEFKQLETNVSLKESDAWPAEPQDAYGLEKLATEELCKHYTKDFGIECRVGRFHNIYGPFGTWKGGREKAPAAFCRKAQTSTDRFEMWGDGLQTRSFTFIDECVEGVLRLTKSDFREPVNIGSDEMVSMNEMAEIILSFEDRELPIHHIPGPEGVRGRNSDNTLIKEKLGWAPTMKLKDGLRFTYFWIKEQIEKEKTQGVDIAGYGSSKVVSTQAPVQLGSLRAADGKE.

Residues 36–62, aspartate 60, and aspartate 80 contribute to the NAD(+) site; that span reads GAGG…SDWK. Substrate is bound by residues glycine 105 and 145–147; that span reads SAC. NAD(+) contacts are provided by tyrosine 175 and lysine 179. Tyrosine 175 acts as the Proton acceptor in catalysis. Residues asparagine 204, 217–219, lysine 226, 242–244, arginine 307, and serine 357 each bind substrate; these read EKA and QTR.

It belongs to the NAD(P)-dependent epimerase/dehydratase family. As to quaternary structure, homodimer. NAD(+) serves as cofactor.

The catalysed reaction is GDP-alpha-D-mannose = GDP-beta-L-gulose. The enzyme catalyses GDP-beta-L-gulose = GDP-beta-L-galactose. The protein operates within cofactor biosynthesis; L-ascorbate biosynthesis via GDP-alpha-D-mannose pathway; L-ascorbate from GDP-alpha-D-mannose: step 1/5. In terms of biological role, catalyzes a reversible epimerization of GDP-D-mannose that precedes the committed step in the biosynthesis of vitamin C (L-ascorbate), resulting in the hydrolysis of the highly energetic glycosyl-pyrophosphoryl linkage. Able to catalyze 2 distinct epimerization reactions and can release both GDP-L-galactose and GDP-L-gulose from GDP-mannose. This Oryza sativa subsp. indica (Rice) protein is GDP-mannose 3,5-epimerase 1.